Here is a 640-residue protein sequence, read N- to C-terminus: Probable inactive receptor kinase At3g08680 (640 aa).

The N-terminal stretch at 1-22 is a signal peptide; it reads MMKIIAAFLFLLVTTFVSRCLS. LRR repeat units lie at residues 93 to 115, 117 to 138, 139 to 162, 163 to 185, and 186 to 206; these read ALRI…ILSL, FIRS…VLSH, RLVN…QNLT, QLTD…PPRL, and KYLN…VKSF. A disordered region spans residues 222-249; the sequence is LTPCPENTTAPSPSPTTPTEGPGTTNIG. Over residues 226 to 247 the composition is skewed to low complexity; the sequence is PENTTAPSPSPTTPTEGPGTTN. Residues 260–280 traverse the membrane as a helical segment; it reads GAIVGIAVGGSVLLFIILAII. A disordered region spans residues 289 to 315; the sequence is DGGQDSTAVPKAKPGRSDNKAEEFGSG. Residues 341–614 enclose the Protein kinase domain; it reads RASAEVLGKG…EEVVNMMEEI (274 aa). Position 343 is a phosphoserine (S343). 347 to 355 lines the ATP pocket; sequence LGKGSYGTT. A Phosphothreonine modification is found at T364. Position 369 (K369) interacts with ATP. 3 positions are modified to phosphothreonine: T441, T514, and T564. A disordered region spans residues 612–640; the sequence is EEIRPSGSGPGSGNRASSPEMIRSSDSPV.

It belongs to the protein kinase superfamily. Tyr protein kinase family.

It is found in the membrane. The protein is Probable inactive receptor kinase At3g08680 of Arabidopsis thaliana (Mouse-ear cress).